A 97-amino-acid polypeptide reads, in one-letter code: Co-chaperonin GroES (97 aa).

This sequence belongs to the GroES chaperonin family. In terms of assembly, heptamer of 7 subunits arranged in a ring. Interacts with the chaperonin GroEL.

The protein resides in the cytoplasm. Its function is as follows. Together with the chaperonin GroEL, plays an essential role in assisting protein folding. The GroEL-GroES system forms a nano-cage that allows encapsulation of the non-native substrate proteins and provides a physical environment optimized to promote and accelerate protein folding. GroES binds to the apical surface of the GroEL ring, thereby capping the opening of the GroEL channel. In Photorhabdus laumondii subsp. laumondii (strain DSM 15139 / CIP 105565 / TT01) (Photorhabdus luminescens subsp. laumondii), this protein is Co-chaperonin GroES.